The chain runs to 81 residues: Acyl carrier protein (81 aa).

The Carrier domain maps to 4 to 79 (SEILEKVKAI…DVLDFINNKV (76 aa)). At S39 the chain carries O-(pantetheine 4'-phosphoryl)serine.

The protein belongs to the acyl carrier protein (ACP) family. 4'-phosphopantetheine is transferred from CoA to a specific serine of apo-ACP by AcpS. This modification is essential for activity because fatty acids are bound in thioester linkage to the sulfhydryl of the prosthetic group.

The protein resides in the cytoplasm. It functions in the pathway lipid metabolism; fatty acid biosynthesis. Carrier of the growing fatty acid chain in fatty acid biosynthesis. The protein is Acyl carrier protein of Thermosynechococcus vestitus (strain NIES-2133 / IAM M-273 / BP-1).